A 142-amino-acid chain; its full sequence is Large ribosomal subunit protein bL17 (142 aa).

The protein belongs to the bacterial ribosomal protein bL17 family. As to quaternary structure, part of the 50S ribosomal subunit. Contacts protein L32.

In Chlamydia felis (strain Fe/C-56) (Chlamydophila felis), this protein is Large ribosomal subunit protein bL17.